A 79-amino-acid chain; its full sequence is Calcium/calmodulin-dependent protein kinase II inhibitor 2 (79 aa).

The segment at 1–21 is disordered; that stretch reads MSEILPYGEDKMGRFGADPEG. The segment at 43 to 69 is inhibitory domain; it reads KRPPKLGQIGRAKRVVIEDDRIDDVLK.

Belongs to the CAMK2N family. As to quaternary structure, interacts with CAMK2A and CAMK2B in the presence of Ca(2+)/calmodulin or after autophosphorylation.

Its subcellular location is the nucleus. It localises to the cytoplasm. The protein resides in the cytosol. The protein localises to the synapse. In terms of biological role, potent and specific cellular inhibitor of CaM-kinase II (CAMK2). Traps Ca(2+)/calmodulin on CAMK2. The sequence is that of Calcium/calmodulin-dependent protein kinase II inhibitor 2 (Camk2n2) from Mus musculus (Mouse).